Reading from the N-terminus, the 1699-residue chain is Cilia- and flagella-associated protein 61 (1699 aa).

Positions 1–22 (MYSNNQLDNPNHSRSQYRNGDQ) are enriched in polar residues. 3 disordered regions span residues 1–23 (MYSN…GDQS), 489–515 (QLKR…DEFK), and 1340–1365 (ERDA…EENQ). Residues 489-503 (QLKRPQKKVTKRPKR) are compositionally biased toward basic residues. Basic and acidic residues-rich tracts occupy residues 504-515 (QKEEDKKEDEFK) and 1340-1359 (ERDA…QSRD).

It is found in the cell projection. Its subcellular location is the cilium. In terms of biological role, as component of a spoke-associated complex, regulates ciliary mobility by mediating a stable and functional assembly of the radial spoke 3 (RS3). This chain is Cilia- and flagella-associated protein 61, found in Tetrahymena thermophila (strain SB210).